The chain runs to 132 residues: Small ribosomal subunit protein uS8 (132 aa).

It belongs to the universal ribosomal protein uS8 family. As to quaternary structure, part of the 30S ribosomal subunit. Contacts proteins S5 and S12.

Functionally, one of the primary rRNA binding proteins, it binds directly to 16S rRNA central domain where it helps coordinate assembly of the platform of the 30S subunit. The protein is Small ribosomal subunit protein uS8 of Ureaplasma urealyticum serovar 10 (strain ATCC 33699 / Western).